The chain runs to 81 residues: Costars family protein ABRACL (81 aa).

An N-acetylmethionine modification is found at Met1.

Belongs to the costars family.

The chain is Costars family protein ABRACL (ABRACL) from Homo sapiens (Human).